Consider the following 709-residue polypeptide: Dual specificity calcium/calmodulin-dependent 3',5'-cyclic nucleotide phosphodiesterase 1C (709 aa).

M1 bears the N-acetylmethionine mark. A calmodulin-binding region spans residues 123 to 146; it reads EKPRFKSIVHAVQAGIFVERMYRR. A PDEase domain is found at 151-528; it reads VGLSYPPAVI…ERWRAKVPKE (378 aa). H228 (proton donor) is an active-site residue. H232, H268, D269, and D376 together coordinate Zn(2+). D269 contacts Mg(2+). 2 disordered regions span residues 453 to 495 and 523 to 650; these read LIDE…APIN and AKVP…TCRL. Residues 483 to 495 show a composition bias toward polar residues; that stretch reads VKTSGSEGSAPIN. The segment covering 523–556 has biased composition (basic and acidic residues); it reads AKVPKEEKAKKEAEEKARLAAEEQQKEMEAKSQA. The segment covering 571–581 has biased composition (polar residues); the sequence is ETKNQVNGTRA. Composition is skewed to basic and acidic residues over residues 582 to 598 and 606 to 633; these read NKSD…EKSS and DFKD…DGTK.

It belongs to the cyclic nucleotide phosphodiesterase family. PDE1 subfamily. As to quaternary structure, homodimer. Zn(2+) serves as cofactor. Mg(2+) is required as a cofactor. As to expression, isoform PDE1C2 is present in the heart and brain and, at lower levels in the lung, liver, kidney and skeletal muscle. Isoform PDE1C1 is expressed in the heart and brain and, at lower levels in lung. Also expressed at low levels in uterus and testis.

It localises to the lysosome. It carries out the reaction a nucleoside 3',5'-cyclic phosphate + H2O = a nucleoside 5'-phosphate + H(+). It catalyses the reaction 3',5'-cyclic GMP + H2O = GMP + H(+). The enzyme catalyses 3',5'-cyclic AMP + H2O = AMP + H(+). Type I PDE are activated by the binding of calmodulin in the presence of Ca(2+). Calmodulin-dependent cyclic nucleotide phosphodiesterase with a dual specificity for the second messengers cAMP and cGMP, which are key regulators of many important physiological processes. Has a high affinity for both cAMP and cGMP. Modulates the amplitude and duration of the cAMP signal in sensory cilia in response to odorant stimulation, hence contributing to the generation of action potentials. Regulates smooth muscle cell proliferation. Regulates the stability of growth factor receptors, including PDGFRB. This chain is Dual specificity calcium/calmodulin-dependent 3',5'-cyclic nucleotide phosphodiesterase 1C, found in Homo sapiens (Human).